A 141-amino-acid polypeptide reads, in one-letter code: Small ribosomal subunit protein uS12 (141 aa).

Asp-102 is modified (3-methylthioaspartic acid). Positions 115–141 (GDASGVEKRRQQRSLYGAKRPKKEASK) are disordered.

It belongs to the universal ribosomal protein uS12 family. In terms of assembly, part of the 30S ribosomal subunit. Contacts proteins S8 and S17. May interact with IF1 in the 30S initiation complex.

In terms of biological role, with S4 and S5 plays an important role in translational accuracy. Functionally, interacts with and stabilizes bases of the 16S rRNA that are involved in tRNA selection in the A site and with the mRNA backbone. Located at the interface of the 30S and 50S subunits, it traverses the body of the 30S subunit contacting proteins on the other side and probably holding the rRNA structure together. The combined cluster of proteins S8, S12 and S17 appears to hold together the shoulder and platform of the 30S subunit. The polypeptide is Small ribosomal subunit protein uS12 (Ureaplasma parvum serovar 3 (strain ATCC 27815 / 27 / NCTC 11736)).